We begin with the raw amino-acid sequence, 678 residues long: Probable E3 ubiquitin ligase complex SCF subunit sconB (678 aa).

The interval 1–52 is disordered; that stretch reads MSTEDNHDSQILTARHRSDASEQSFKSLFGGPSSEDGKETEPDTHDHNHSFS. The segment covering 35–49 has biased composition (basic and acidic residues); the sequence is EDGKETEPDTHDHNH. An F-box domain is found at 178–224; it reads IDFITALPPEIAFKILCYLDTTSLCKASQVSRGWRALADDDVVWHRM. The segment at 266–287 is disordered; it reads VVGPRSPDASAESPPSGKRKLE. WD repeat units lie at residues 347–375, 387–415, 427–455, 466–496, 508–543, 553–595, 607–635, and 647–675; these read GHTN…KIWD, GHES…KVWN, GHRG…KIWN, GHTD…RLWD, GHVG…TSGD, MGLE…RLWE, GHLE…KIWD, and GHSG…RMYS.

Belongs to the WD repeat MET30/SCONB/SCON-2 family. In terms of assembly, component of the SCF(sconB) E3 ubiquitin ligase complex.

It functions in the pathway protein modification; protein ubiquitination. Component of the SCF(sconB) E3 ubiquitin ligase complex involved in the regulation of sulfur metabolite repression, probably by mediating the inactivation or degradation of the metR transcription factor. This is Probable E3 ubiquitin ligase complex SCF subunit sconB (sconB) from Emericella nidulans (strain FGSC A4 / ATCC 38163 / CBS 112.46 / NRRL 194 / M139) (Aspergillus nidulans).